Consider the following 138-residue polypeptide: High mobility group B protein 4 (138 aa).

Disordered stretches follow at residues 1-41 (MKGG…PPSA) and 105-138 (LKLA…EDDD). The span at 18–29 (KTRGRKAGKKTK) shows a compositional bias: basic residues. The segment at residues 35 to 104 (PKRPPSAFFV…EYIKNVQQYN (70 aa)) is a DNA-binding region (HMG box). A phosphoserine mark is found at Ser-123 and Ser-130. Over residues 126-138 (DEAVSEEEAEDDD) the composition is skewed to acidic residues.

Belongs to the HMGB family. Mostly expressed roots and flowers, and, to a lower extent, in stems and leaves.

The protein localises to the nucleus. It is found in the cytoplasm. It localises to the cytosol. Its function is as follows. Binds preferentially double-stranded DNA. The protein is High mobility group B protein 4 (HMGB4) of Arabidopsis thaliana (Mouse-ear cress).